Here is a 210-residue protein sequence, read N- to C-terminus: Chloramphenicol acetyltransferase (210 aa).

Residue histidine 79 is part of the active site.

The protein belongs to the transferase hexapeptide repeat family.

It carries out the reaction chloramphenicol + acetyl-CoA = chloramphenicol 3-acetate + CoA. In terms of biological role, this enzyme is an effector of chloramphenicol resistance in bacteria. The protein is Chloramphenicol acetyltransferase (cat) of Morganella morganii (Proteus morganii).